The sequence spans 301 residues: Probable alpha-L-glutamate ligase 2 (301 aa).

Residues 104-287 (MQLLSRKGIG…VASMIIEFIV (184 aa)) enclose the ATP-grasp domain. Residues lysine 141, 178 to 179 (EY), aspartate 187, and 211 to 213 (RSN) each bind ATP. 3 residues coordinate Mg(2+): aspartate 248, glutamate 260, and asparagine 262. Mn(2+) is bound by residues aspartate 248, glutamate 260, and asparagine 262.

Belongs to the RimK family. Mg(2+) is required as a cofactor. Mn(2+) serves as cofactor.

The chain is Probable alpha-L-glutamate ligase 2 from Pseudoalteromonas atlantica (strain T6c / ATCC BAA-1087).